The following is a 599-amino-acid chain: Fumarate reductase flavoprotein subunit (599 aa).

Residues 12–16, 36–38, 44–52, 156–158, and D212 each bind FAD; these read GAGGG, VSK, THTVAAEGG, and HFV. Tele-8alpha-FAD histidine is present on H45. Active-site residues include H233 and R249. FAD contacts are provided by residues 357-358, E381, and 392-398; these read HY and RLGSNSL.

It belongs to the FAD-dependent oxidoreductase 2 family. FRD/SDH subfamily. As to quaternary structure, part of an enzyme complex containing four subunits: a flavoprotein (FrdA), an iron-sulfur protein (FrdB), and two hydrophobic anchor proteins (FrdC and FrdD). The cofactor is FAD.

The protein resides in the cell inner membrane. It catalyses the reaction a quinone + succinate = fumarate + a quinol. The enzyme catalyses a menaquinone + succinate = a menaquinol + fumarate. The protein is Fumarate reductase flavoprotein subunit (frdA) of Haemophilus influenzae (strain ATCC 51907 / DSM 11121 / KW20 / Rd).